The primary structure comprises 263 residues: Chromosomal replication initiator protein DnaA (263 aa).

Position 1 (Asp1) is a region of interest, domain I, interacts with DnaA modulators. Position 1 (Asp1) is a region of interest, domain II. Positions 1–177 are domain III, AAA+ region; sequence DSGLGKTHLL…GIINKIEFSI (177 aa). The ATP site is built by Gly3, Gly5, Lys6, and Thr7. Residues 178–263 form a domain IV, binds dsDNA region; it reads IQDNSAAPKI…KNYSEIGVAF (86 aa).

It belongs to the DnaA family. As to quaternary structure, oligomerizes as a right-handed, spiral filament on DNA at oriC.

It localises to the cytoplasm. Plays an essential role in the initiation and regulation of chromosomal replication. ATP-DnaA binds to the origin of replication (oriC) to initiate formation of the DNA replication initiation complex once per cell cycle. Binds the DnaA box (a 9 base pair repeat at the origin) and separates the double-stranded (ds)DNA. Forms a right-handed helical filament on oriC DNA; dsDNA binds to the exterior of the filament while single-stranded (ss)DNA is stabiized in the filament's interior. The ATP-DnaA-oriC complex binds and stabilizes one strand of the AT-rich DNA unwinding element (DUE), permitting loading of DNA polymerase. After initiation quickly degrades to an ADP-DnaA complex that is not apt for DNA replication. Binds acidic phospholipids. This is Chromosomal replication initiator protein DnaA from Spiroplasma apis.